Here is a 119-residue protein sequence, read N- to C-terminus: Large ribosomal subunit protein uL18 (119 aa).

This sequence belongs to the universal ribosomal protein uL18 family. As to quaternary structure, part of the 50S ribosomal subunit; part of the 5S rRNA/L5/L18/L25 subcomplex. Contacts the 5S and 23S rRNAs.

Functionally, this is one of the proteins that bind and probably mediate the attachment of the 5S RNA into the large ribosomal subunit, where it forms part of the central protuberance. In Endomicrobium trichonymphae, this protein is Large ribosomal subunit protein uL18.